The following is a 358-amino-acid chain: Peptide chain release factor 1 (358 aa).

Glutamine 233 carries the post-translational modification N5-methylglutamine.

It belongs to the prokaryotic/mitochondrial release factor family. Post-translationally, methylated by PrmC. Methylation increases the termination efficiency of RF1.

The protein localises to the cytoplasm. Its function is as follows. Peptide chain release factor 1 directs the termination of translation in response to the peptide chain termination codons UAG and UAA. The chain is Peptide chain release factor 1 from Staphylococcus aureus (strain MRSA252).